The sequence spans 312 residues: Pectin lyase (312 aa).

The active site involves R201. Positions 254-274 (GSGTFTDTNSVPPITNQKSPK) are disordered. Over residues 256–274 (GTFTDTNSVPPITNQKSPK) the composition is skewed to polar residues.

The protein belongs to the polysaccharide lyase 1 family.

It carries out the reaction Eliminative cleavage of (1-&gt;4)-alpha-D-galacturonan methyl ester to give oligosaccharides with 4-deoxy-6-O-methyl-alpha-D-galact-4-enuronosyl groups at their non-reducing ends.. This Pseudomonas marginalis (Pseudomonas panacis) protein is Pectin lyase (pnl).